Here is a 247-residue protein sequence, read N- to C-terminus: MAVLEVCCYSMACAREAERCGADRIELCAAPQEGGLTPSYGVLVSVREAITLPVHPIVRPRGGDFCYTEQEFAAMLSDIRMVRELGFPGLVTGVLNADGQVDIPRMKKIMAAAGPLAVTFHRAFDLCADPRQAWKTLGELGVKRILTSGQQSSAEKGISLITELIAAGDTPIIMAGAGVRAANLPLLLQAGVKEVHSSAGQWLPSDMRFRHPGVSMSADPDADEYRRYAVNGEAVAEMKGIISAWRS.

It belongs to the CutC family.

The protein resides in the cytoplasm. This is PF03932 family protein CutC from Klebsiella pneumoniae (strain 342).